A 191-amino-acid chain; its full sequence is Outer membrane lipoprotein DolP (191 aa).

An N-terminal signal peptide occupies residues 1 to 18; that stretch reads MKAFSPLAVLISALLLQG. Cys-19 carries the N-palmitoyl cysteine lipid modification. The S-diacylglycerol cysteine moiety is linked to residue Cys-19. BON domains follow at residues 46 to 115 and 124 to 191; these read DDGT…RQGQ and NDTW…TYIK.

It belongs to the lipoprotein DolP family.

It localises to the cell outer membrane. Functionally, plays an important role in maintaining outer membrane integrity. Contributes to virulence. The chain is Outer membrane lipoprotein DolP from Salmonella typhimurium (strain LT2 / SGSC1412 / ATCC 700720).